The chain runs to 69 residues: DNA gyrase inhibitor YacG (69 aa).

4 residues coordinate Zn(2+): C7, C10, C26, and C30.

It belongs to the DNA gyrase inhibitor YacG family. In terms of assembly, interacts with GyrB. Zn(2+) serves as cofactor.

In terms of biological role, inhibits all the catalytic activities of DNA gyrase by preventing its interaction with DNA. Acts by binding directly to the C-terminal domain of GyrB, which probably disrupts DNA binding by the gyrase. The protein is DNA gyrase inhibitor YacG of Shewanella sp. (strain W3-18-1).